A 488-amino-acid chain; its full sequence is Teichuronic acid biosynthesis protein TuaE (488 aa).

The next 14 helical transmembrane spans lie at 7–29 (AVHT…GAIH), 35–57 (MQMA…ATAF), 64–86 (FMAV…AIHL), 91–110 (LFLY…FGMV), 122–144 (LQVK…SLLW), 154–173 (YLAL…MYVQ), 180–202 (IVYA…NHIT), 222–244 (PTSV…FFYI), 257–274 (AIGL…FATG), 279–298 (LLGI…PPVL), 303–322 (IWLS…SKIY), 354–376 (NAWH…SYYL), 397–419 (ILAN…LIWV), and 459–476 (LFFH…VNVL).

The protein resides in the cell membrane. Its pathway is cell wall biogenesis; teichuronic acid biosynthesis. Functionally, might be involved in the polymerization of teichuronic acid repeating units after their translocation to the outer surface of the membrane. The polypeptide is Teichuronic acid biosynthesis protein TuaE (tuaE) (Bacillus subtilis (strain 168)).